Reading from the N-terminus, the 668-residue chain is SHC SH2 domain-binding protein 1 (668 aa).

Ala-2 is modified (N-acetylalanine). 3 positions are modified to phosphoserine: Ser-31, Ser-44, and Ser-273. 5 PbH1 repeats span residues Gly-428–His-451, His-452–Thr-473, Ser-474–Pro-496, Gly-497–Asp-518, and Ile-526–Lys-548. A Phosphoserine modification is found at Ser-630.

As to quaternary structure, interacts directly with isoform p52shc of SHC1 via its SH2 domain. Interacts with TRIM71; leading to enhanced SHCBP1 protein stability. Interacts with both members of the centralspindlin complex, KIF23 and RACGAP1. Expressed in spleen, lung and heart with higher expression in testis. No expression in brain, liver and skeletal muscle. Elevated expression in actively cycling cells.

It localises to the midbody. The protein localises to the cytoplasm. Its subcellular location is the cytoskeleton. It is found in the spindle. Functionally, may play a role in signaling pathways governing cellular proliferation, cell growth and differentiation. May be a component of a novel signaling pathway downstream of Shc. Acts as a positive regulator of FGF signaling in neural progenitor cells. The chain is SHC SH2 domain-binding protein 1 (Shcbp1) from Mus musculus (Mouse).